Here is a 455-residue protein sequence, read N- to C-terminus: Serine--tRNA ligase (455 aa).

252–254 (TAE) provides a ligand contact to L-serine. ATP-binding positions include 283–285 (RKE) and Val-299. Glu-306 provides a ligand contact to L-serine. 370-373 (EVVS) provides a ligand contact to ATP. Thr-406 lines the L-serine pocket.

It belongs to the class-II aminoacyl-tRNA synthetase family. Type-1 seryl-tRNA synthetase subfamily. In terms of assembly, homodimer. The tRNA molecule binds across the dimer.

Its subcellular location is the cytoplasm. It catalyses the reaction tRNA(Ser) + L-serine + ATP = L-seryl-tRNA(Ser) + AMP + diphosphate + H(+). The enzyme catalyses tRNA(Sec) + L-serine + ATP = L-seryl-tRNA(Sec) + AMP + diphosphate + H(+). Its pathway is aminoacyl-tRNA biosynthesis; selenocysteinyl-tRNA(Sec) biosynthesis; L-seryl-tRNA(Sec) from L-serine and tRNA(Sec): step 1/1. In terms of biological role, catalyzes the attachment of serine to tRNA(Ser). Is also able to aminoacylate tRNA(Sec) with serine, to form the misacylated tRNA L-seryl-tRNA(Sec), which will be further converted into selenocysteinyl-tRNA(Sec). This chain is Serine--tRNA ligase, found in Pyrococcus abyssi (strain GE5 / Orsay).